A 499-amino-acid chain; its full sequence is Aspartyl/glutamyl-tRNA(Asn/Gln) amidotransferase subunit B (499 aa).

It belongs to the GatB/GatE family. GatB subfamily. In terms of assembly, heterotrimer of A, B and C subunits.

The enzyme catalyses L-glutamyl-tRNA(Gln) + L-glutamine + ATP + H2O = L-glutaminyl-tRNA(Gln) + L-glutamate + ADP + phosphate + H(+). The catalysed reaction is L-aspartyl-tRNA(Asn) + L-glutamine + ATP + H2O = L-asparaginyl-tRNA(Asn) + L-glutamate + ADP + phosphate + 2 H(+). In terms of biological role, allows the formation of correctly charged Asn-tRNA(Asn) or Gln-tRNA(Gln) through the transamidation of misacylated Asp-tRNA(Asn) or Glu-tRNA(Gln) in organisms which lack either or both of asparaginyl-tRNA or glutaminyl-tRNA synthetases. The reaction takes place in the presence of glutamine and ATP through an activated phospho-Asp-tRNA(Asn) or phospho-Glu-tRNA(Gln). The sequence is that of Aspartyl/glutamyl-tRNA(Asn/Gln) amidotransferase subunit B from Bartonella tribocorum (strain CIP 105476 / IBS 506).